Here is a 175-residue protein sequence, read N- to C-terminus: SsrA-binding protein (175 aa).

Disordered regions lie at residues 1 to 29 (MTRNPQPDRSKTAPKNAKRDPVASGERDA) and 152 to 175 (KRETDRRKTADRDAREAIARSRKS).

The protein belongs to the SmpB family.

Its subcellular location is the cytoplasm. In terms of biological role, required for rescue of stalled ribosomes mediated by trans-translation. Binds to transfer-messenger RNA (tmRNA), required for stable association of tmRNA with ribosomes. tmRNA and SmpB together mimic tRNA shape, replacing the anticodon stem-loop with SmpB. tmRNA is encoded by the ssrA gene; the 2 termini fold to resemble tRNA(Ala) and it encodes a 'tag peptide', a short internal open reading frame. During trans-translation Ala-aminoacylated tmRNA acts like a tRNA, entering the A-site of stalled ribosomes, displacing the stalled mRNA. The ribosome then switches to translate the ORF on the tmRNA; the nascent peptide is terminated with the 'tag peptide' encoded by the tmRNA and targeted for degradation. The ribosome is freed to recommence translation, which seems to be the essential function of trans-translation. This is SsrA-binding protein from Koribacter versatilis (strain Ellin345).